A 72-amino-acid chain; its full sequence is Exodeoxyribonuclease 7 small subunit (72 aa).

It belongs to the XseB family. Heterooligomer composed of large and small subunits.

The protein resides in the cytoplasm. The enzyme catalyses Exonucleolytic cleavage in either 5'- to 3'- or 3'- to 5'-direction to yield nucleoside 5'-phosphates.. Its function is as follows. Bidirectionally degrades single-stranded DNA into large acid-insoluble oligonucleotides, which are then degraded further into small acid-soluble oligonucleotides. The chain is Exodeoxyribonuclease 7 small subunit from Chlamydia trachomatis serovar D (strain ATCC VR-885 / DSM 19411 / UW-3/Cx).